The chain runs to 293 residues: Acidic endochitinase SE2 (293 aa).

The N-terminal stretch at 1 to 25 (MAAKIVSVLFLISLLIFASFESSHG) is a signal peptide. In terms of domain architecture, GH18 spans 26–293 (SQIVIYWGQN…GYSSAIKSSV (268 aa)). Intrachain disulfides connect cysteine 45–cysteine 91 and cysteine 75–cysteine 81. The active-site Proton donor is glutamate 151. The cysteines at positions 183 and 212 are disulfide-linked.

The protein belongs to the glycosyl hydrolase 18 family. Chitinase class II subfamily. In terms of tissue distribution, accumulates in leaves during infection.

Its subcellular location is the secreted. The protein localises to the extracellular space. It carries out the reaction Random endo-hydrolysis of N-acetyl-beta-D-glucosaminide (1-&gt;4)-beta-linkages in chitin and chitodextrins.. Functionally, this protein functions as a defense against chitin containing fungal pathogens. This endochitinase also exhibits exochitinase activity, i.e. it is capable of hydrolyzing chito-oligosaccharides, including chitobiose. This is Acidic endochitinase SE2 (SE2) from Beta vulgaris (Sugar beet).